Here is a 662-residue protein sequence, read N- to C-terminus: DNA topoisomerase 4 subunit B (662 aa).

ATP-binding positions include Y20, N60, D87, 129 to 135 (GLHGVGV), and K359. The 115-residue stretch at 439-553 (TELFIVEGDS…DGHLYLAKPP (115 aa)) folds into the Toprim domain. Residues E445, D518, and D520 each coordinate Mg(2+).

This sequence belongs to the type II topoisomerase family. ParE type 1 subfamily. As to quaternary structure, heterotetramer composed of ParC and ParE. Mg(2+) is required as a cofactor. Requires Mn(2+) as cofactor. Ca(2+) serves as cofactor.

It catalyses the reaction ATP-dependent breakage, passage and rejoining of double-stranded DNA.. Topoisomerase IV is essential for chromosome segregation. It relaxes supercoiled DNA. Performs the decatenation events required during the replication of a circular DNA molecule. This chain is DNA topoisomerase 4 subunit B, found in Rickettsia bellii (strain RML369-C).